Here is a 211-residue protein sequence, read N- to C-terminus: PITH domain-containing protein GA19395 (211 aa).

The PITH domain occupies 20 to 192 (DHALEMGIEY…GVTICNYEAR (173 aa)).

It belongs to the PITHD1 family.

The polypeptide is PITH domain-containing protein GA19395 (Drosophila pseudoobscura pseudoobscura (Fruit fly)).